Here is a 767-residue protein sequence, read N- to C-terminus: Pre-mRNA-splicing factor ATP-dependent RNA helicase PRP43 (767 aa).

Residues Met-1–Phe-74 form a disordered region. 2 positions are modified to phosphoserine: Ser-8 and Ser-9. Basic and acidic residues predominate over residues Thr-58–Lys-70. The region spanning Leu-103–Pro-268 is the Helicase ATP-binding domain. Position 116–123 (Gly-116–Thr-123) interacts with ATP. A DEAH box motif is present at residues Asp-215–His-218. Positions Thr-293 to Gly-473 constitute a Helicase C-terminal domain.

Belongs to the DEAD box helicase family. DEAH subfamily. DDX15/PRP43 sub-subfamily. As to quaternary structure, component of the NTR complex (NTC-related complex), composed of NTR1, NTR2 and PRP43. Interacts with NTR1 and NTR2. Interacts with SPP382.

The protein resides in the nucleus. The enzyme catalyses ATP + H2O = ADP + phosphate + H(+). Functionally, pre-mRNA processing factor involved in disassembly of spliceosomes after the release of mature mRNA. This Saccharomyces cerevisiae (strain ATCC 204508 / S288c) (Baker's yeast) protein is Pre-mRNA-splicing factor ATP-dependent RNA helicase PRP43 (PRP43).